A 418-amino-acid chain; its full sequence is MANKLRNYTINFGPQHPAAHGVLRMILELEGETIVRADPHIGLLHRGTEKLAETKTYLQALPYMDRLDYVSMMVNEQAYCLAVEKLAGIDVPIRAQYIRVMFAEVTRILNHLMGIGSHAFDIGAMTAILYAFRDREELMDLYEAVSGARMHAAYFRPGGVYRDLPDFMPKYESSKFRNAKVLKQLNESREGTMLDFIDAFCERFPKNIDTLETLLTDNRIWKQRTVGIGVVTPERAMQKGFTGVMLRGSGVEWDVRKKQPYEMYDKMDFDIPVGVNGDCYDRYLCRMEEMRQSVRIIKQCSEWLRVNPGPVITTNHKFAPPKRTEMKTGMEDLIHHFKLFTEGMHVPEGETYTAVEHPKGEFGVYIISDGANKPYRLKIRAPGFAHLQGMDEMAKGHMLADVVAIIGTQDIVFGEVDR.

This sequence belongs to the complex I 49 kDa subunit family. As to quaternary structure, NDH-1 is composed of 14 different subunits. Subunits NuoB, C, D, E, F, and G constitute the peripheral sector of the complex.

Its subcellular location is the cell inner membrane. The catalysed reaction is a quinone + NADH + 5 H(+)(in) = a quinol + NAD(+) + 4 H(+)(out). NDH-1 shuttles electrons from NADH, via FMN and iron-sulfur (Fe-S) centers, to quinones in the respiratory chain. The immediate electron acceptor for the enzyme in this species is believed to be ubiquinone. Couples the redox reaction to proton translocation (for every two electrons transferred, four hydrogen ions are translocated across the cytoplasmic membrane), and thus conserves the redox energy in a proton gradient. The sequence is that of NADH-quinone oxidoreductase subunit D from Neisseria meningitidis serogroup C (strain 053442).